The primary structure comprises 837 residues: CoA-transferase/lyase DddD (837 aa).

The active-site Nucleophile is D602.

It belongs to the CoA-transferase III family.

Its function is as follows. Dimethyl sulfide (DMS)-producing enzyme. Acts both as a transferase and a lyase: uses acetyl-coenzyme A (acetyl-coA) and dimethylsulfoniopropionate (DMSP) as substrates to produce DMS, acetate and 3-hydroxypropionate-CoA (3HP-CoA). Mediates the CoA-transferase prior to lyase activity. DMS is the principal form by which sulfur is transported from oceans to the atmosphere and is a key component of the ocean sulfur cycle. The chain is CoA-transferase/lyase DddD from Marinomonas sp. (strain MWYL1).